Here is a 349-residue protein sequence, read N- to C-terminus: Protein Wnt-7b (349 aa).

A signal peptide spans 1 to 24 (MHRNFRKWIFYVFLCFGVLYVKLG). 5 disulfide bridges follow: Cys73/Cys84, Cys123/Cys131, Cys133/Cys152, Cys200/Cys214, and Cys202/Cys209. N-linked (GlcNAc...) asparagine glycans are attached at residues Asn83 and Asn127. Ser206 carries the O-palmitoleoyl serine; by PORCN lipid modification. A disordered linker region spans residues 238–266 (VEVVRASRLRQPTFLRIKQLRSYQKPMET). Cystine bridges form between Cys278–Cys309, Cys294–Cys304, Cys308–Cys348, Cys324–Cys339, Cys326–Cys336, and Cys331–Cys332. Asn295 carries an N-linked (GlcNAc...) asparagine glycan.

The protein belongs to the Wnt family. Forms a soluble 1:1 complex with AFM; this prevents oligomerization and is required for prolonged biological activity. The complex with AFM may represent the physiological form in body fluids. Interacts with FZD1 and FZD10. Interacts with FZD4 (in vitro). Interacts with PORCN. Interacts with glypican GPC3. Interacts (via intrinsically disordered linker region) with RECK; interaction with RECK confers ligand selectivity for Wnt7 in brain endothelial cells and allows these cells to selectively respond to Wnt7. In terms of processing, palmitoleoylation is required for efficient binding to frizzled receptors. Depalmitoleoylation leads to Wnt signaling pathway inhibition. In terms of tissue distribution, moderately expressed in fetal brain, weakly expressed in fetal lung and kidney, and faintly expressed in adult brain, lung and prostate.

It localises to the secreted. The protein resides in the extracellular space. It is found in the extracellular matrix. Ligand for members of the frizzled family of seven transmembrane receptors that functions in the canonical Wnt/beta-catenin signaling pathway. Required for normal fusion of the chorion and the allantois during placenta development. Required for central nervous system (CNS) angiogenesis and blood-brain barrier regulation. In Homo sapiens (Human), this protein is Protein Wnt-7b (WNT7B).